The sequence spans 388 residues: Chorismate synthase (388 aa).

2 residues coordinate NADP(+): Arg-39 and Arg-45. The tract at residues 95 to 118 is disordered; it reads EKNEKSRRVSRPRPGHADLVGGMK. FMN contacts are provided by residues 130–132, 251–252, Gly-296, 311–315, and Arg-337; these read RSS, NA, and KPIPT.

Belongs to the chorismate synthase family. Homotetramer. The cofactor is FMNH2.

It catalyses the reaction 5-O-(1-carboxyvinyl)-3-phosphoshikimate = chorismate + phosphate. It functions in the pathway metabolic intermediate biosynthesis; chorismate biosynthesis; chorismate from D-erythrose 4-phosphate and phosphoenolpyruvate: step 7/7. Catalyzes the anti-1,4-elimination of the C-3 phosphate and the C-6 proR hydrogen from 5-enolpyruvylshikimate-3-phosphate (EPSP) to yield chorismate, which is the branch point compound that serves as the starting substrate for the three terminal pathways of aromatic amino acid biosynthesis. This reaction introduces a second double bond into the aromatic ring system. The polypeptide is Chorismate synthase (Listeria welshimeri serovar 6b (strain ATCC 35897 / DSM 20650 / CCUG 15529 / CIP 8149 / NCTC 11857 / SLCC 5334 / V8)).